Reading from the N-terminus, the 92-residue chain is Small ribosomal subunit protein uS19 (92 aa).

Belongs to the universal ribosomal protein uS19 family.

Protein S19 forms a complex with S13 that binds strongly to the 16S ribosomal RNA. The protein is Small ribosomal subunit protein uS19 of Corynebacterium urealyticum (strain ATCC 43042 / DSM 7109).